A 260-amino-acid chain; its full sequence is Octanoyltransferase (260 aa).

The BPL/LPL catalytic domain occupies 42-241; that stretch reads PQVPDGLLLL…SFCQVFGLQA (200 aa). Residues 97–104, 172–174, and 185–187 each bind substrate; these read RGGEVTYH, AIG, and GFA. The active-site Acyl-thioester intermediate is Cys203.

It belongs to the LipB family.

The protein resides in the cytoplasm. It carries out the reaction octanoyl-[ACP] + L-lysyl-[protein] = N(6)-octanoyl-L-lysyl-[protein] + holo-[ACP] + H(+). Its pathway is protein modification; protein lipoylation via endogenous pathway; protein N(6)-(lipoyl)lysine from octanoyl-[acyl-carrier-protein]: step 1/2. Functionally, catalyzes the transfer of endogenously produced octanoic acid from octanoyl-acyl-carrier-protein onto the lipoyl domains of lipoate-dependent enzymes. Lipoyl-ACP can also act as a substrate although octanoyl-ACP is likely to be the physiological substrate. The protein is Octanoyltransferase of Synechococcus sp. (strain JA-3-3Ab) (Cyanobacteria bacterium Yellowstone A-Prime).